The following is a 90-amino-acid chain: Evasin P1126 (90 aa).

A signal peptide spans 1-25 (MTSHSAVRIAIFAVIALHSIFECLS). 3 disulfide bridges follow: Cys-46–Cys-62, Cys-50–Cys-64, and Cys-58–Cys-75. An N-linked (GlcNAc...) asparagine glycan is attached at Asn-55. An N-linked (GlcNAc...) asparagine glycan is attached at Asn-77.

It localises to the secreted. In terms of biological role, salivary chemokine-binding protein which binds to host chemokines CXCL1, CXCL2, CXCL3, CXCL4, CXCL5, CXCL6, CXCL7, CXCL10 and CXCL11. The polypeptide is Evasin P1126 (Amblyomma cajennense (Cayenne tick)).